The sequence spans 465 residues: UDP-N-acetylmuramoylalanine--D-glutamate ligase (465 aa).

An ATP-binding site is contributed by 127–133; the sequence is GSNGKST.

The protein belongs to the MurCDEF family.

The protein localises to the cytoplasm. The enzyme catalyses UDP-N-acetyl-alpha-D-muramoyl-L-alanine + D-glutamate + ATP = UDP-N-acetyl-alpha-D-muramoyl-L-alanyl-D-glutamate + ADP + phosphate + H(+). The protein operates within cell wall biogenesis; peptidoglycan biosynthesis. Its function is as follows. Cell wall formation. Catalyzes the addition of glutamate to the nucleotide precursor UDP-N-acetylmuramoyl-L-alanine (UMA). The sequence is that of UDP-N-acetylmuramoylalanine--D-glutamate ligase from Cereibacter sphaeroides (strain ATCC 17023 / DSM 158 / JCM 6121 / CCUG 31486 / LMG 2827 / NBRC 12203 / NCIMB 8253 / ATH 2.4.1.) (Rhodobacter sphaeroides).